Reading from the N-terminus, the 306-residue chain is D-alanine--D-alanine ligase (306 aa).

Positions 104–303 (KMLWKAFGLP…FEQLVVKILE (200 aa)) constitute an ATP-grasp domain. ATP is bound at residue 134 to 189 (VAKLGLPLMVKPSLEGSSVGLTKVKAVEELKSAVEYALKFDNTILIEEWLAGDELT). Mg(2+) contacts are provided by Asp257, Glu270, and Asn272.

This sequence belongs to the D-alanine--D-alanine ligase family. It depends on Mg(2+) as a cofactor. Mn(2+) serves as cofactor.

Its subcellular location is the cytoplasm. It carries out the reaction 2 D-alanine + ATP = D-alanyl-D-alanine + ADP + phosphate + H(+). It participates in cell wall biogenesis; peptidoglycan biosynthesis. Functionally, cell wall formation. The sequence is that of D-alanine--D-alanine ligase from Haemophilus influenzae (strain PittGG).